Consider the following 407-residue polypeptide: Elongation factor Tu, chloroplastic (407 aa).

The tr-type G domain occupies lysine 10 to glutamate 212. The G1 stretch occupies residues glycine 19–threonine 26. Position 19–26 (glycine 19–threonine 26) interacts with GTP. Mg(2+) is bound at residue threonine 26. The segment at glycine 59 to asparagine 63 is G2. The tract at residues aspartate 80–glycine 83 is G3. GTP is bound by residues aspartate 80 to histidine 84 and asparagine 135 to aspartate 138. Residues asparagine 135–aspartate 138 are G4. A G5 region spans residues serine 173–leucine 175.

Belongs to the TRAFAC class translation factor GTPase superfamily. Classic translation factor GTPase family. EF-Tu/EF-1A subfamily.

The protein resides in the plastid. Its subcellular location is the chloroplast. It catalyses the reaction GTP + H2O = GDP + phosphate + H(+). In terms of biological role, GTP hydrolase that promotes the GTP-dependent binding of aminoacyl-tRNA to the A-site of ribosomes during protein biosynthesis. The polypeptide is Elongation factor Tu, chloroplastic (tufA) (Emiliania huxleyi (Coccolithophore)).